The primary structure comprises 772 residues: Mitochondrial intermediate peptidase (772 aa).

The transit peptide at 1–37 directs the protein to the mitochondrion; it reads MLRTIILKAGSNASIPSPSRQNKLLRFFATAGAVSRT. Residue histidine 558 participates in Zn(2+) binding. Residue glutamate 559 is part of the active site. Zn(2+) contacts are provided by histidine 562 and glutamate 587.

This sequence belongs to the peptidase M3 family. Requires Zn(2+) as cofactor.

The protein localises to the mitochondrion matrix. The enzyme catalyses Release of an N-terminal octapeptide as second stage of processing of some proteins imported into the mitochondrion.. With respect to regulation, stimulated by Fe(2+). Its function is as follows. Cleaves proteins, imported into the mitochondrion, to their mature size. While most mitochondrial precursor proteins are processed to the mature form in one step by mitochondrial processing peptidase (MPP), the sequential cleavage by MIP of an octapeptide after initial processing by MPP is a required step for a subgroup of nuclear-encoded precursor proteins destined for the matrix or the inner membrane. Cleaves precursor proteins of respiratory components, including subunits of the electron transport chain and tricarboxylic acid cycle enzymes, and components of the mitochondrial genetic machinery, including ribosomal proteins, translation factors, and proteins required for mitochondrial DNA metabolism. The chain is Mitochondrial intermediate peptidase (OCT1) from Saccharomyces cerevisiae (strain ATCC 204508 / S288c) (Baker's yeast).